A 325-amino-acid chain; its full sequence is E3 ubiquitin-protein ligase SIAH2 (325 aa).

Residues 1–15 are compositionally biased toward polar residues; it reads MSRPSSTGPSANKPC. Residues 1–43 form a disordered region; sequence MSRPSSTGPSANKPCSKQPPPPQTPHAPSPAAPPAAATISAAG. Residue serine 6 is modified to Phosphoserine. Serine 16 is subject to Phosphoserine; by DYRK2. Over residues 17–33 the composition is skewed to pro residues; it reads KQPPPPQTPHAPSPAAP. The residue at position 24 (threonine 24) is a Phosphothreonine; by MAPK14. A Phosphoserine; by DYRK2 and MAPK14 modification is found at serine 29. Positions 34–43 are enriched in low complexity; it reads PAAATISAAG. Serine 69 bears the Phosphoserine; by DYRK2 mark. The RING-type zinc-finger motif lies at 81–116; it reads CPVCFDYVLPPILQCQAGHLVCNQCRQKLSCCPTCR. Threonine 120 bears the Phosphothreonine; by DYRK2 mark. An SBD region spans residues 131 to 323; the sequence is VASAVLFPCK…LGINVTISTC (193 aa). Residues 134-194 form an SIAH-type zinc finger; the sequence is AVLFPCKYAT…VMSHLMHAHK (61 aa). Cysteine 139, cysteine 146, histidine 158, cysteine 162, cysteine 169, cysteine 176, histidine 188, and histidine 193 together coordinate Zn(2+).

Belongs to the SINA (Seven in absentia) family. In terms of assembly, homodimer. Interacts with VAV1, without mediating its ubiquitin-mediated degradation. Probable component of some large E3 complex possibly composed of UBE2D1, SIAH2, CACYBP/SIP, SKP1, APC and TBL1X. Interacts with UBE2I. Interacts with UBE2E2. Interacts with PEG10, which may inhibit its activity. Interacts with PEG3 and EGLN2. Interacts with DYRK2. Interacts with SNCAIP. Interacts with NR1D1 and NR1D2. Interacts with DCC. Interacts with AXIN1. Phosphorylated at Thr-24 and Ser-29 by MAPK14, which mediates the degradation by the proteasome of EGLN3. Phosphorylated at Ser-29 by DYRK2; this increases the ubiquitin ligase activity and promotes degradation of EGLN3. As to expression, detected in brain (at protein level).

Its subcellular location is the cytoplasm. It is found in the nucleus. It carries out the reaction S-ubiquitinyl-[E2 ubiquitin-conjugating enzyme]-L-cysteine + [acceptor protein]-L-lysine = [E2 ubiquitin-conjugating enzyme]-L-cysteine + N(6)-ubiquitinyl-[acceptor protein]-L-lysine.. It functions in the pathway protein modification; protein ubiquitination. Functionally, E3 ubiquitin-protein ligase that mediates ubiquitination and subsequent proteasomal degradation of target proteins. E3 ubiquitin ligases accept ubiquitin from an E2 ubiquitin-conjugating enzyme in the form of a thioester and then directly transfers the ubiquitin to targeted substrates. Mediates E3 ubiquitin ligase activity either through direct binding to substrates or by functioning as the essential RING domain subunit of larger E3 complexes. Mediates ubiquitination and proteasomal degradation of DYRK2 in response to hypoxia. Promotes monoubiquitination of SNCA. Triggers the ubiquitin-mediated degradation of many substrates, including proteins involved in transcription regulation (GPS2, POU2AF1, PML, NCOR1), a cell surface receptor (DCC), an antiapoptotic protein (BAG1), and a protein involved in synaptic vesicle function in neurons (SYP). It is thereby involved in apoptosis, tumor suppression, cell cycle, transcription and signaling processes. Has some overlapping function with SIAH1. Triggers the ubiquitin-mediated degradation of TRAF2, whereas SIAH1 does not. Regulates cellular clock function via ubiquitination of circadian transcriptional repressors NR1D1 and NR1D2 leading to their proteasomal degradation. Plays an important role in mediating the rhythmic degradation/clearance of NR1D1 and NR1D2 contributing to their circadian profile of protein abundance. Mediates ubiquitination and degradation of EGLN2 and EGLN3 in response to the unfolded protein response (UPR), leading to their degradation and subsequent stabilization of ATF4. Also part of the Wnt signaling pathway in which it mediates the Wnt-induced ubiquitin-mediated proteasomal degradation of AXIN1. The sequence is that of E3 ubiquitin-protein ligase SIAH2 (Siah2) from Rattus norvegicus (Rat).